The primary structure comprises 70 residues: Ubiquinol-cytochrome c reductase complex assembly factor 5 (70 aa).

Residues 1–19 (MFTRAQVRRILQRVPGKQR) lie on the Mitochondrial matrix side of the membrane. A helical membrane pass occupies residues 20-41 (FGIYRFLPFFFVLGGTMEWIMI). At 42 to 70 (KVRVGQETFYDVYRRKASERQYQRRLEDE) the chain is on the mitochondrial intermembrane side.

This sequence belongs to the UQCC5 family. In terms of assembly, associates with the mitochondrial ribosome. Interacts with UQCC6. Interacts with MT-CYB; interacts with newly synthesizes MT-CYB. Forms a complex, named COMB/coordinator of mitochondrial CYTB biogenesis, composed of UQCC1, UQCC2, UQCC4, UQCC5 and UQCC6; regulates MT-CYB synthesis and promotes its membrane insertion.

The protein localises to the mitochondrion inner membrane. In terms of biological role, required for the assembly and stability of the mitochondrial ubiquinol-cytochrome c reductase complex (complex III (CIII) or cytochrome b-c1 complex), a multisubunit transmembrane complex that is part of the mitochondrial electron transport chain (ETC) which drives oxidative phosphorylation. Mediates early complex III biogenesis. Participates in regulating the levels of electron transport chain proteins, and therefore energy supply, in response to changes in energy demand. Also involved in the first steps of cytochrome c oxidase complex (complex IV) assembly. The protein is Ubiquinol-cytochrome c reductase complex assembly factor 5 of Homo sapiens (Human).